A 264-amino-acid polypeptide reads, in one-letter code: Probable BRI1 kinase inhibitor 1 (264 aa).

2 disordered regions span residues 1–146 (MTMN…GLDV) and 165–240 (FSRH…SEES). Residues 9-30 (RSQPPPPHPPLFKPTTPPPPPL) are compositionally biased toward pro residues. A compositionally biased stretch (low complexity) spans 31–40 (LSTSTSTSPP). Residues 77–97 (LSHNNYSSKANQHRQTGSSSS) are compositionally biased toward polar residues. The span at 98 to 107 (SKEKDREYKA) shows a compositional bias: basic and acidic residues. Composition is skewed to low complexity over residues 208–219 (LSSAPASLRASP) and 227–239 (VGGSVKVSTSSEE).

As to quaternary structure, interacts with BRI1. In terms of processing, phosphorylated by BRI1.

In terms of biological role, negative regulator of brassinosteroid signaling. This is Probable BRI1 kinase inhibitor 1 (BKI1) from Oryza sativa subsp. japonica (Rice).